The sequence spans 116 residues: Prefoldin subunit beta (116 aa).

Belongs to the prefoldin subunit beta family. In terms of assembly, heterohexamer of two alpha and four beta subunits.

Its subcellular location is the cytoplasm. Its function is as follows. Molecular chaperone capable of stabilizing a range of proteins. Seems to fulfill an ATP-independent, HSP70-like function in archaeal de novo protein folding. The polypeptide is Prefoldin subunit beta (Thermococcus onnurineus (strain NA1)).